A 307-amino-acid polypeptide reads, in one-letter code: Putative ankyrin repeat protein L59 (307 aa).

9 ANK repeats span residues 41-67 (LFNK…NLEK), 68-97 (IDNK…DTTN), 98-127 (HNYS…DIRA), 129-157 (DDEA…DVRN), 158-187 (RNDF…DIRT), 188-217 (DDDY…NIHA), 219-247 (GDSA…DIRI), 248-277 (DNDY…DIGA), and 279-307 (NNYA…LKLY).

This chain is Putative ankyrin repeat protein L59, found in Acanthamoeba polyphaga (Amoeba).